Reading from the N-terminus, the 154-residue chain is MVNTGEIKNLEAIDIVKLLSVLPHRYPFLLIDRIIEIDGDRKAIGIKNVTVNEPHFVGHFPENPVMPGVLILEAMAQTAGAISLLALGRGKEDLVYLMTIDNAKFRKPVVPGDQMRIHVQLLKKRSEVRRFLCIAEVEGTRVSEAEISAMVVKS.

Histidine 59 is a catalytic residue.

This sequence belongs to the thioester dehydratase family. FabZ subfamily.

The protein resides in the cytoplasm. The catalysed reaction is a (3R)-hydroxyacyl-[ACP] = a (2E)-enoyl-[ACP] + H2O. Its function is as follows. Involved in unsaturated fatty acids biosynthesis. Catalyzes the dehydration of short chain beta-hydroxyacyl-ACPs and long chain saturated and unsaturated beta-hydroxyacyl-ACPs. In Bartonella bacilliformis (strain ATCC 35685 / KC583 / Herrer 020/F12,63), this protein is 3-hydroxyacyl-[acyl-carrier-protein] dehydratase FabZ.